The chain runs to 447 residues: Kynureninase (447 aa).

Pyridoxal 5'-phosphate is bound by residues Leu-106, Thr-107, 134 to 137, Asp-220, His-223, and Tyr-245; that span reads FPSD. Lys-246 carries the N6-(pyridoxal phosphate)lysine modification. 2 residues coordinate pyridoxal 5'-phosphate: Trp-275 and Asn-303.

It belongs to the kynureninase family. Homodimer. Pyridoxal 5'-phosphate is required as a cofactor.

The protein localises to the cytoplasm. It carries out the reaction L-kynurenine + H2O = anthranilate + L-alanine + H(+). It catalyses the reaction 3-hydroxy-L-kynurenine + H2O = 3-hydroxyanthranilate + L-alanine + H(+). It participates in amino-acid degradation; L-kynurenine degradation; L-alanine and anthranilate from L-kynurenine: step 1/1. It functions in the pathway cofactor biosynthesis; NAD(+) biosynthesis; quinolinate from L-kynurenine: step 2/3. Catalyzes the cleavage of L-kynurenine (L-Kyn) and L-3-hydroxykynurenine (L-3OHKyn) into anthranilic acid (AA) and 3-hydroxyanthranilic acid (3-OHAA), respectively. The sequence is that of Kynureninase from Eremothecium gossypii (strain ATCC 10895 / CBS 109.51 / FGSC 9923 / NRRL Y-1056) (Yeast).